Reading from the N-terminus, the 104-residue chain is uncharacterized protein (104 aa).

This is an uncharacterized protein from Dictyostelium discoideum (Social amoeba).